The following is a 555-amino-acid chain: Protein NRT1/ PTR FAMILY 5.12 (555 aa).

2 helical membrane-spanning segments follow: residues Phe-53–Ser-73 and Leu-83–Leu-103. At Thr-108 the chain carries Phosphothreonine. The next 10 helical transmembrane spans lie at Ile-109–Ile-129, Val-148–Cys-168, Ser-190–Thr-210, Leu-221–Ile-241, Ala-315–Gln-335, Val-357–Tyr-377, Ile-401–Lys-421, Val-443–Gly-463, Ala-482–Ile-502, and Tyr-526–Ala-546.

It belongs to the major facilitator superfamily. Proton-dependent oligopeptide transporter (POT/PTR) (TC 2.A.17) family. Expressed in shoots and roots.

Its subcellular location is the membrane. In Arabidopsis thaliana (Mouse-ear cress), this protein is Protein NRT1/ PTR FAMILY 5.12 (NPF5.12).